Reading from the N-terminus, the 232-residue chain is Thiamine import ATP-binding protein ThiQ (232 aa).

An ABC transporter domain is found at 2 to 230 (LKLTDITWLY…KASASALLGI (229 aa)). 32–39 (GPSGAGKS) is an ATP binding site.

This sequence belongs to the ABC transporter superfamily. Thiamine importer (TC 3.A.1.19.1) family. The complex is composed of two ATP-binding proteins (ThiQ), two transmembrane proteins (ThiP) and a solute-binding protein (ThiB).

The protein resides in the cell inner membrane. It catalyses the reaction thiamine(out) + ATP + H2O = thiamine(in) + ADP + phosphate + H(+). In terms of biological role, part of the ABC transporter complex ThiBPQ involved in thiamine import. Responsible for energy coupling to the transport system. This is Thiamine import ATP-binding protein ThiQ from Escherichia coli O157:H7.